Consider the following 940-residue polypeptide: Alanine--tRNA ligase (940 aa).

Zn(2+) is bound by residues His-581, His-585, Cys-683, and His-687.

It belongs to the class-II aminoacyl-tRNA synthetase family. Requires Zn(2+) as cofactor.

Its subcellular location is the cytoplasm. It carries out the reaction tRNA(Ala) + L-alanine + ATP = L-alanyl-tRNA(Ala) + AMP + diphosphate. Its function is as follows. Catalyzes the attachment of alanine to tRNA(Ala) in a two-step reaction: alanine is first activated by ATP to form Ala-AMP and then transferred to the acceptor end of tRNA(Ala). Also edits incorrectly charged Ser-tRNA(Ala) and Gly-tRNA(Ala) via its editing domain. This Leptospira borgpetersenii serovar Hardjo-bovis (strain JB197) protein is Alanine--tRNA ligase.